The chain runs to 718 residues: Exostosin-2 (718 aa).

The Cytoplasmic segment spans residues 1 to 25 (MCASVKYNIRGPALIPRMKTKHRIY). Residues 26-46 (YITLFSIVLLGLIATGMFQFW) form a helical; Signal-anchor for type II membrane protein membrane-spanning segment. Residues 47 to 718 (PHSIESSGDW…LKSFPNIGSL (672 aa)) lie on the Lumenal side of the membrane. 4 cysteine pairs are disulfide-bonded: Cys85/Cys90, Cys96/Cys151, Cys286/Cys300, and Cys318/Cys339. Asn288 is a glycosylation site (N-linked (GlcNAc...) asparagine). The UDP site is built by Leu461, Arg465, Asn490, and Asn517. Residues Arg465, Asn490, Asn517, Arg522, Asp538, Asp539, and Asp540 each contribute to the UDP-N-acetyl-alpha-D-glucosamine site. 2 residues coordinate UDP: Asp538 and Asp539. Asp540 contacts Mn(2+). The a protein site is built by Tyr582 and Ser584. Cys626 and Cys676 are disulfide-bonded. UDP-N-acetyl-alpha-D-glucosamine-binding residues include Glu627 and Asp628. A glycan (N-linked (GlcNAc...) asparagine) is linked at Asn637. The a protein site is built by Lys651 and Lys653. Arg673 contributes to the UDP-N-acetyl-alpha-D-glucosamine binding site.

Belongs to the glycosyltransferase 47 family. In terms of assembly, part of the heparan sulfate polymerase, a dimeric complex composed of EXT1 and EXT2. Could also form homooligomeric complexes. Interacts with NDST1. Interacts with GALNT5. Mn(2+) serves as cofactor. A soluble form is generated by proteolytic processing. In terms of processing, N-glycosylated at Asn-637.

Its subcellular location is the golgi apparatus membrane. The protein resides in the golgi apparatus. It is found in the cis-Golgi network membrane. The protein localises to the endoplasmic reticulum membrane. It localises to the secreted. The catalysed reaction is 3-O-{[(1-&gt;4)-beta-D-GlcA-(1-&gt;4)-alpha-D-GlcNAc](n)-(1-&gt;4)-beta-D-GlcA-(1-&gt;3)-beta-D-Gal-(1-&gt;3)-beta-D-Gal-(1-&gt;4)-beta-D-Xyl}-L-seryl-[protein] + UDP-N-acetyl-alpha-D-glucosamine = 3-O-{alpha-D-GlcNAc-[(1-&gt;4)-beta-D-GlcA-(1-&gt;4)-alpha-D-GlcNAc](n)-(1-&gt;4)-beta-D-GlcA-(1-&gt;3)-beta-D-Gal-(1-&gt;3)-beta-D-Gal-(1-&gt;4)-beta-D-Xyl}-L-seryl-[protein] + UDP + H(+). It functions in the pathway protein modification; protein glycosylation. Glycosyltransferase forming with EXT1 the heterodimeric heparan sulfate polymerase which catalyzes the elongation of the heparan sulfate glycan backbone. Glycan backbone extension consists in the alternating transfer of (1-&gt;4)-beta-D-GlcA and (1-&gt;4)-alpha-D-GlcNAc residues from their respective UDP-sugar donors. Both EXT1 and EXT2 are required for the full activity of the polymerase since EXT1 bears the N-acetylglucosaminyl-proteoglycan 4-beta-glucuronosyltransferase activity within the complex while EXT2 carries the glucuronosyl-N-acetylglucosaminyl-proteoglycan 4-alpha-N-acetylglucosaminyltransferase activity. Heparan sulfate proteoglycans are ubiquitous components of the extracellular matrix and play an important role in tissue homeostasis and signaling. The sequence is that of Exostosin-2 from Bos taurus (Bovine).